We begin with the raw amino-acid sequence, 83 residues long: Mitochondrial import inner membrane translocase subunit Tim8 B (83 aa).

A2 bears the N-acetylalanine mark. A Twin CX3C motif motif is present at residues 36–59 (CWDKCVEKPGNRLDSRTENCLSSC). 2 disulfide bridges follow: C36-C59 and C40-C55.

It belongs to the small Tim family. Heterohexamer; possibly composed of 3 copies of TIMM8B and 3 copies of TIMM13, named soluble 70 kDa complex. Associates with the TIM22 complex, whose core is composed of TIMM22.

It is found in the mitochondrion inner membrane. Its function is as follows. Probable mitochondrial intermembrane chaperone that participates in the import and insertion of some multi-pass transmembrane proteins into the mitochondrial inner membrane. Also required for the transfer of beta-barrel precursors from the TOM complex to the sorting and assembly machinery (SAM complex) of the outer membrane. Acts as a chaperone-like protein that protects the hydrophobic precursors from aggregation and guide them through the mitochondrial intermembrane space. The sequence is that of Mitochondrial import inner membrane translocase subunit Tim8 B (TIMM8B) from Bos taurus (Bovine).